Here is a 216-residue protein sequence, read N- to C-terminus: Potassium-transporting ATPase KdpC subunit (216 aa).

The chain crosses the membrane as a helical span at residues 12 to 32 (LLGVSLLVFGLLYQGSLMAIG). The segment covering 197–207 (QNETDQNSDMN) has biased composition (polar residues). The disordered stretch occupies residues 197–216 (QNETDQNSDMNASEIANGDH).

The protein belongs to the KdpC family. The system is composed of three essential subunits: KdpA, KdpB and KdpC. The complex also contains KdpF, a small non-essential subunit.

The protein localises to the cell membrane. In terms of biological role, part of the high-affinity ATP-driven potassium transport (or Kdp) system, which catalyzes the hydrolysis of ATP coupled with the electrogenic transport of potassium into the cytoplasm. This subunit acts as a catalytic chaperone that increases the ATP-binding affinity of the ATP-hydrolyzing subunit KdpB by the formation of a transient KdpB/KdpC/ATP ternary complex. The Kdp system is essential for growth under K(+) limitation, and for survival under desiccation and salt crystal inclusion. This Halobacterium salinarum (strain ATCC 29341 / DSM 671 / R1) protein is Potassium-transporting ATPase KdpC subunit.